Reading from the N-terminus, the 276-residue chain is 6-chlorohydroxyquinol 1,2-dioxygenase (276 aa).

Fe cation-binding residues include Y157, Y191, H215, and H217.

This sequence belongs to the intradiol ring-cleavage dioxygenase family. Requires Fe(3+) as cofactor.

It participates in aromatic compound metabolism. It functions in the pathway xenobiotic degradation. Involved in the degradation of 2,4,6-trichlorophenol (2,4,6-TCP). May catalyze the oxidation of 6-chlorohydroxyquinol (6-CHQ) to 2-chloromaleylacetate (2-CMA). This chain is 6-chlorohydroxyquinol 1,2-dioxygenase, found in Cupriavidus pinatubonensis (strain JMP 134 / LMG 1197) (Cupriavidus necator (strain JMP 134)).